The primary structure comprises 315 residues: Eukaryotic translation initiation factor 2 subunit 1 (315 aa).

The region spanning 17–88 is the S1 motif domain; sequence DDVVMVNVRS…DKGYIDLSKR (72 aa). Residues S49 and S52 each carry the phosphoserine modification. A disordered region spans residues 292 to 315; the sequence is RLEKENAEVDGDDDAEEMEAKTED. Residues 299–308 show a composition bias toward acidic residues; sequence EVDGDDDAEE.

It belongs to the eIF-2-alpha family. In terms of assembly, eukaryotic translation initiation factor 2 eIF2 is a heterotrimeric complex composed of an alpha, a beta and a gamma subunit. Phosphorylation at Ser-49 and Ser-52 stabilizes the eIF-2/GDP/eIF2B complex and prevents GDP/GTP exchange reaction, thus impairing the recycling of eIF-2 between successive rounds of initiation and leading to global inhibition of translation, while concomitantly initiating the preferential translation of integrated stress response (ISR)-specific mRNAs.

The protein localises to the cytoplasm. It is found in the stress granule. The protein resides in the cytosol. With respect to regulation, activity is regulated by phosphorylation at Ser-49 and Ser-52, which stabilizes the eIF-2/GDP/eIF2B complex and prevents the eIF2B-mediated exchange of GDP for GTP, thereby preventing the formation of the 43S pre-initiation complex (PIC). This results in the global attenuation of 5' cap-dependent protein synthesis and concomitant translation of ISR-specific mRNAs that contain a short upstream open reading frame (uORF) in their 5' UTR. In terms of biological role, functions in the early steps of protein synthesis by forming a ternary complex with GTP and initiator tRNA. This complex binds to a 40S ribosomal subunit, followed by mRNA binding to form a 43S pre-initiation complex. Junction of the 60S ribosomal subunit to form the 80S initiation complex is preceded by hydrolysis of the GTP bound to eIF-2 and release of an eIF-2-GDP binary complex. In order for eIF-2 to recycle and catalyze another round of initiation, the GDP bound to eIF-2 must exchange with GTP by way of a reaction catalyzed by eIF2B. EIF2S1/eIF2-alpha is a key component of the integrated stress response (ISR), required for adaptation to various stress: phosphorylation by metabolic-stress sensing protein kinases in response to stress converts EIF2S1/eIF-2-alpha in a global protein synthesis inhibitor, leading to a attenuation of cap-dependent translation, while concomitantly initiating the preferential translation of ISR-specific mRNAs, such as the transcriptional activators ATF4 and QRICH1. This is Eukaryotic translation initiation factor 2 subunit 1 (eif2s1) from Xenopus tropicalis (Western clawed frog).